Reading from the N-terminus, the 309-residue chain is D-alanine--D-alanine ligase (309 aa).

Residues 106–305 (KMLWKAFGLP…FEQLVVKILE (200 aa)) enclose the ATP-grasp domain. 136–191 (VEKLGLPVMVKPSLEGSSVGLTKVKRVEDLKSAVDFALKYDDTVLIEEWLSGAEFT) provides a ligand contact to ATP. Residues Asp-259, Glu-272, and Asn-274 each contribute to the Mg(2+) site.

Belongs to the D-alanine--D-alanine ligase family. The cofactor is Mg(2+). Mn(2+) serves as cofactor.

The protein localises to the cytoplasm. The catalysed reaction is 2 D-alanine + ATP = D-alanyl-D-alanine + ADP + phosphate + H(+). It functions in the pathway cell wall biogenesis; peptidoglycan biosynthesis. Its function is as follows. Cell wall formation. In Pasteurella multocida (strain Pm70), this protein is D-alanine--D-alanine ligase.